A 141-amino-acid polypeptide reads, in one-letter code: Nucleoside diphosphate kinase 1 (141 aa).

ATP-binding residues include Lys-11, Phe-59, Arg-87, Thr-93, Arg-104, and Asn-114. Residue His-117 is the Pros-phosphohistidine intermediate of the active site.

The protein belongs to the NDK family. In terms of assembly, homotetramer. Mg(2+) is required as a cofactor.

It localises to the cytoplasm. The catalysed reaction is a 2'-deoxyribonucleoside 5'-diphosphate + ATP = a 2'-deoxyribonucleoside 5'-triphosphate + ADP. It catalyses the reaction a ribonucleoside 5'-diphosphate + ATP = a ribonucleoside 5'-triphosphate + ADP. Functionally, major role in the synthesis of nucleoside triphosphates other than ATP. The ATP gamma phosphate is transferred to the NDP beta phosphate via a ping-pong mechanism, using a phosphorylated active-site intermediate. This chain is Nucleoside diphosphate kinase 1, found in Protochlamydia amoebophila (strain UWE25).